Consider the following 1183-residue polypeptide: DNA-directed RNA polymerase subunit beta' (1183 aa).

Residues Cys-60, Cys-62, Cys-75, and Cys-78 each contribute to the Zn(2+) site. Asp-449, Asp-451, and Asp-453 together coordinate Mg(2+). Cys-794, Cys-867, Cys-874, and Cys-877 together coordinate Zn(2+).

This sequence belongs to the RNA polymerase beta' chain family. The RNAP catalytic core consists of 2 alpha, 1 beta, 1 beta' and 1 omega subunit. When a sigma factor is associated with the core the holoenzyme is formed, which can initiate transcription. Mg(2+) is required as a cofactor. Zn(2+) serves as cofactor.

It carries out the reaction RNA(n) + a ribonucleoside 5'-triphosphate = RNA(n+1) + diphosphate. In terms of biological role, DNA-dependent RNA polymerase catalyzes the transcription of DNA into RNA using the four ribonucleoside triphosphates as substrates. This Caldanaerobacter subterraneus subsp. tengcongensis (strain DSM 15242 / JCM 11007 / NBRC 100824 / MB4) (Thermoanaerobacter tengcongensis) protein is DNA-directed RNA polymerase subunit beta'.